The following is a 291-amino-acid chain: uncharacterized protein (291 aa).

Belongs to the PhyH family.

This is an uncharacterized protein from Mycobacterium bovis (strain ATCC BAA-935 / AF2122/97).